The primary structure comprises 204 residues: UPF0134 protein MPN_655 (204 aa).

A disordered region spans residues E46–Q132. Over residues S64–P80 the composition is skewed to pro residues. Positions Y117–Q132 are enriched in basic and acidic residues.

This sequence belongs to the UPF0134 family.

This is UPF0134 protein MPN_655 from Mycoplasma pneumoniae (strain ATCC 29342 / M129 / Subtype 1) (Mycoplasmoides pneumoniae).